A 648-amino-acid chain; its full sequence is Threonine--tRNA ligase (648 aa).

A TGS domain is found at methionine 1–threonine 63. The interval aspartate 243–proline 541 is catalytic. Cysteine 337, histidine 388, and histidine 518 together coordinate Zn(2+).

It belongs to the class-II aminoacyl-tRNA synthetase family. In terms of assembly, homodimer. Requires Zn(2+) as cofactor.

It is found in the cytoplasm. It carries out the reaction tRNA(Thr) + L-threonine + ATP = L-threonyl-tRNA(Thr) + AMP + diphosphate + H(+). Functionally, catalyzes the attachment of threonine to tRNA(Thr) in a two-step reaction: L-threonine is first activated by ATP to form Thr-AMP and then transferred to the acceptor end of tRNA(Thr). Also edits incorrectly charged L-seryl-tRNA(Thr). The protein is Threonine--tRNA ligase of Pediococcus pentosaceus (strain ATCC 25745 / CCUG 21536 / LMG 10740 / 183-1w).